The following is a 197-amino-acid chain: Imidazoleglycerol-phosphate dehydratase (197 aa).

It belongs to the imidazoleglycerol-phosphate dehydratase family.

Its subcellular location is the cytoplasm. The enzyme catalyses D-erythro-1-(imidazol-4-yl)glycerol 3-phosphate = 3-(imidazol-4-yl)-2-oxopropyl phosphate + H2O. It participates in amino-acid biosynthesis; L-histidine biosynthesis; L-histidine from 5-phospho-alpha-D-ribose 1-diphosphate: step 6/9. The polypeptide is Imidazoleglycerol-phosphate dehydratase (Alkalilimnicola ehrlichii (strain ATCC BAA-1101 / DSM 17681 / MLHE-1)).